A 120-amino-acid polypeptide reads, in one-letter code: UPF0231 protein YacL (120 aa).

It belongs to the UPF0231 family.

The protein is UPF0231 protein YacL of Escherichia coli (strain SMS-3-5 / SECEC).